The sequence spans 448 residues: Squalene synthase ERG9 (448 aa).

Residues 420–440 (RIEPGNFNCNVVLFGIGALIL) traverse the membrane as a helical segment.

This sequence belongs to the phytoene/squalene synthase family. Requires Mg(2+) as cofactor.

It localises to the endoplasmic reticulum membrane. The protein localises to the microsome. It catalyses the reaction 2 (2E,6E)-farnesyl diphosphate + NADPH + H(+) = squalene + 2 diphosphate + NADP(+). The catalysed reaction is 2 (2E,6E)-farnesyl diphosphate + NADH + H(+) = squalene + 2 diphosphate + NAD(+). Its pathway is terpene metabolism; lanosterol biosynthesis; lanosterol from farnesyl diphosphate: step 1/3. Squalene synthase; part of the third module of ergosterol biosynthesis pathway that includes the late steps of the pathway. ERG9 produces squalene from 2 farnesyl pyrophosphate moieties. The third module or late pathway involves the ergosterol synthesis itself through consecutive reactions that mainly occur in the endoplasmic reticulum (ER) membrane. Firstly, the squalene synthase ERG9 catalyzes the condensation of 2 farnesyl pyrophosphate moieties to form squalene, which is the precursor of all steroids. Squalene synthase is crucial for balancing the incorporation of farnesyl diphosphate (FPP) into sterol and nonsterol isoprene synthesis. Secondly, the squalene epoxidase ERG1 catalyzes the stereospecific oxidation of squalene to (S)-2,3-epoxysqualene, which is considered to be a rate-limiting enzyme in steroid biosynthesis. Then, the lanosterol synthase ERG7 catalyzes the cyclization of (S)-2,3 oxidosqualene to lanosterol, a reaction that forms the sterol core. In the next steps, lanosterol is transformed to zymosterol through a complex process involving various demethylation, reduction and desaturation reactions. The lanosterol 14-alpha-demethylase ERG11 (also known as CYP51) catalyzes C14-demethylation of lanosterol to produce 4,4'-dimethyl cholesta-8,14,24-triene-3-beta-ol, which is critical for ergosterol biosynthesis. The C-14 reductase ERG24 reduces the C14=C15 double bond of 4,4-dimethyl-cholesta-8,14,24-trienol to produce 4,4-dimethyl-cholesta-8,24-dienol. 4,4-dimethyl-cholesta-8,24-dienol is substrate of the C-4 demethylation complex ERG25-ERG26-ERG27 in which ERG25 catalyzes the three-step monooxygenation required for the demethylation of 4,4-dimethyl and 4alpha-methylsterols, ERG26 catalyzes the oxidative decarboxylation that results in a reduction of the 3-beta-hydroxy group at the C-3 carbon to an oxo group, and ERG27 is responsible for the reduction of the keto group on the C-3. ERG28 has a role as a scaffold to help anchor ERG25, ERG26 and ERG27 to the endoplasmic reticulum and ERG29 regulates the activity of the iron-containing C4-methylsterol oxidase ERG25. Then, the sterol 24-C-methyltransferase ERG6 catalyzes the methyl transfer from S-adenosyl-methionine to the C-24 of zymosterol to form fecosterol. The C-8 sterol isomerase ERG2 catalyzes the reaction which results in unsaturation at C-7 in the B ring of sterols and thus converts fecosterol to episterol. The sterol-C5-desaturase ERG3 then catalyzes the introduction of a C-5 double bond in the B ring to produce 5-dehydroepisterol. The C-22 sterol desaturase ERG5 further converts 5-dehydroepisterol into ergosta-5,7,22,24(28)-tetraen-3beta-ol by forming the C-22(23) double bond in the sterol side chain. Finally, ergosta-5,7,22,24(28)-tetraen-3beta-ol is substrate of the C-24(28) sterol reductase ERG4 to produce ergosterol. In Candida albicans (Yeast), this protein is Squalene synthase ERG9.